We begin with the raw amino-acid sequence, 652 residues long: RNA-binding E3 ubiquitin-protein ligase MEX3C (652 aa).

Disordered stretches follow at residues 15-39 and 80-136; these read AAPA…ELEG and QARR…EDRP. Residues 18–33 show a composition bias toward pro residues; that stretch reads APLPQPPPLPPPPPAG. The span at 101–134 shows a compositional bias: acidic residues; it reads AELELEVDEEEGEEAELDGELLEEEELEEAEEED. 2 KH domains span residues 225-286 and 319-380; these read TTEC…KREI and QTTV…REEI. Disordered stretches follow at residues 429 to 448 and 506 to 566; these read ARMM…SGST and FEPV…HVGL. The span at 430 to 448 shows a compositional bias: low complexity; it reads RMMSNYRNDSSSSLGSGST. Polar residues predominate over residues 519 to 537; that stretch reads PSGNMKTQRRGSQPSTPRL. Residues Ser-530 and Ser-538 each carry the phosphoserine modification. A compositionally biased stretch (basic and acidic residues) spans 544–555; sequence SIEHPLARRVRS. The RING-type zinc finger occupies 601-641; the sequence is CVICFENEVIAALVPCGHNLFCMECANKICEKRTPSCPVCQ.

In terms of assembly, interacts with USP7, which antagonizes the ability to degrade mRNA. Phosphorylated.

It is found in the nucleus. The protein localises to the cytoplasm. It carries out the reaction S-ubiquitinyl-[E2 ubiquitin-conjugating enzyme]-L-cysteine + [acceptor protein]-L-lysine = [E2 ubiquitin-conjugating enzyme]-L-cysteine + N(6)-ubiquitinyl-[acceptor protein]-L-lysine.. Functionally, RNA-binding protein. May be involved in post-transcriptional regulatory mechanisms, modulating levels of some mRNAs by promoting their degradation in a way involving ubiquitin ligase activity. May act as suppressor of replication stress and chromosome missegregation. In Mus musculus (Mouse), this protein is RNA-binding E3 ubiquitin-protein ligase MEX3C (Mex3c).